A 319-amino-acid polypeptide reads, in one-letter code: 8-methylmenaquinol:fumarate reductase iron-sulfur subunit (319 aa).

The region spanning Met-1–His-96 is the 2Fe-2S ferredoxin-type domain. Positions 51, 56, 59, and 71 each coordinate [2Fe-2S] cluster. 2 4Fe-4S ferredoxin-type domains span residues Phe-139 to Tyr-168 and Val-193 to Ile-224. Cys-148, Cys-151, Cys-154, Cys-158, Cys-204, Cys-207, Cys-210, and Cys-214 together coordinate [4Fe-4S] cluster.

The protein belongs to the succinate dehydrogenase/fumarate reductase iron-sulfur protein family. The MFR complex is composed of three subunits: a flavoprotein (SdhA), an iron-sulfur protein (SdhB), and one hydrophobic anchor protein (SdhE). It depends on [2Fe-2S] cluster as a cofactor. [4Fe-4S] cluster is required as a cofactor.

The protein localises to the periplasm. It localises to the cell membrane. It carries out the reaction 8-methylmenaquinone-6 + succinate = 8-methylmenaquinol-6 + fumarate. Its function is as follows. Iron-sulfur subunit of 8-methylmenaquinol:fumarate reductase (MFR), that catalyzes the reduction of fumarate using 8-methylmenaquinol-6 as electron donor. The complex shows no succinate oxidation activity. Is involved in anaerobic metabolism. The protein is 8-methylmenaquinol:fumarate reductase iron-sulfur subunit of Wolinella succinogenes (strain ATCC 29543 / DSM 1740 / CCUG 13145 / JCM 31913 / LMG 7466 / NCTC 11488 / FDC 602W) (Vibrio succinogenes).